The primary structure comprises 76 residues: Dermaseptin-SP2 (76 aa).

The first 22 residues, 1 to 22 (MAFLKKSLFLVLFLGLVSLSIC), serve as a signal peptide directing secretion. Positions 23–45 (EEEKRENEDEEEQEDEEQSEEKR) are excised as a propeptide. The tract at residues 24–44 (EEKRENEDEEEQEDEEQSEEK) is disordered. The segment covering 30–41 (EDEEEQEDEEQS) has biased composition (acidic residues). A Glutamine amide modification is found at Gln-73. The propeptide occupies 74 to 76 (GEQ).

Expressed by the skin glands.

It localises to the secreted. The protein resides in the target cell membrane. In terms of biological role, antimicrobial peptide with activity against Gram-positive and Gram-negative bacteria and fungi. Has been tested against E.coli (MIC=2.68-8 uM), S.aureus (ATCC 25923, MIC=2.68-8 uM), S.aureus (ATCC oxacillin resistant, MIC=2.68 uM), K.pneumoniae (MIC=10.71 uM) and C.albicans (MIC=10.71-32 uM). Probably acts by disturbing membrane functions with its alpha-helical amphipathic structure. May penetrate bacterial membranes, but stay at the mammalian membrane surface. Shows a very weak hemolytic activity. The polypeptide is Dermaseptin-SP2 (Agalychnis spurrelli (Gliding leaf frog)).